We begin with the raw amino-acid sequence, 387 residues long: Small ribosomal subunit protein mS31 (387 aa).

The transit peptide at 1 to 56 directs the protein to the mitochondrion; that stretch reads MLHRIPAFIRPRPFSGLPLSCGNREVSVAASVLPAAGSGAVRTENTIQRHFCTSRS. Disordered stretches follow at residues 59-83 and 203-228; these read SKKDDQSVPANETSQKAAESQGEGK and KSPSMRVSSRPQHQIQFDEEVDSSLS. Composition is skewed to polar residues over residues 66–76 and 207–217; these read VPANETSQKAA and MRVSSRPQHQI.

Belongs to the mitochondrion-specific ribosomal protein mS31 family. In terms of assembly, component of the mitochondrial ribosome small subunit (28S) which comprises a 12S rRNA and about 30 distinct proteins.

Its subcellular location is the mitochondrion. This Rattus norvegicus (Rat) protein is Small ribosomal subunit protein mS31 (Mrps31).